Reading from the N-terminus, the 289-residue chain is Ribosomal protein L11 methyltransferase (289 aa).

S-adenosyl-L-methionine is bound by residues threonine 142, glycine 163, aspartate 185, and asparagine 226.

Belongs to the methyltransferase superfamily. PrmA family.

The protein localises to the cytoplasm. The catalysed reaction is L-lysyl-[protein] + 3 S-adenosyl-L-methionine = N(6),N(6),N(6)-trimethyl-L-lysyl-[protein] + 3 S-adenosyl-L-homocysteine + 3 H(+). Its function is as follows. Methylates ribosomal protein L11. In Legionella pneumophila (strain Corby), this protein is Ribosomal protein L11 methyltransferase.